The following is a 407-amino-acid chain: MKFVDEVSIRVKAGDGGNGCMSFRREKFIENGGPNGGDGGDGGSIFMVADVNLNTLVDYRYTRHFDAERGSNGGSADCTGRKGEELVLRVPVGTTIIDATTQEIIGDLTKDGQRLMVAQGGWHGLGNTRFKSSTNRAPRQTTPGKPGDQRDLKLELKVLADVGLLGLPNAGKSTFIRSVSAAKPKVADYPFTTLVPNLGVVSVDRWKSFVVADIPGLIEGASDGAGLGIRFLKHLARTRLLLHLVDMAPLDESSAPDAAEVIVNELEKFSPSLAERDRWLVLNKCDQILEEEQEARKQEIVDRLEWTGPVYVISAIAKEGTEQLTRDIMRYLEERSQRIAEEPGYAEELAELDQRIEDEARAQLQALDDQRALRRSGVKSVHDIGDDDWDEEDVDDEDGPEIIYVRD.

The Obg domain occupies 1–159 (MKFVDEVSIR…RDLKLELKVL (159 aa)). A disordered region spans residues 127–149 (NTRFKSSTNRAPRQTTPGKPGDQ). Over residues 129 to 143 (RFKSSTNRAPRQTTP) the composition is skewed to polar residues. The OBG-type G domain occupies 160 to 333 (ADVGLLGLPN…LTRDIMRYLE (174 aa)). Residues 166-173 (GLPNAGKS), 191-195 (FTTLV), 213-216 (DIPG), 283-286 (NKCD), and 314-316 (SAI) contribute to the GTP site. Mg(2+) contacts are provided by S173 and T193. The disordered stretch occupies residues 376–407 (SGVKSVHDIGDDDWDEEDVDDEDGPEIIYVRD). Acidic residues predominate over residues 385 to 400 (GDDDWDEEDVDDEDGP).

Belongs to the TRAFAC class OBG-HflX-like GTPase superfamily. OBG GTPase family. In terms of assembly, monomer. Mg(2+) is required as a cofactor.

It is found in the cytoplasm. In terms of biological role, an essential GTPase which binds GTP, GDP and possibly (p)ppGpp with moderate affinity, with high nucleotide exchange rates and a fairly low GTP hydrolysis rate. Plays a role in control of the cell cycle, stress response, ribosome biogenesis and in those bacteria that undergo differentiation, in morphogenesis control. The sequence is that of GTPase Obg from Pseudomonas savastanoi pv. phaseolicola (strain 1448A / Race 6) (Pseudomonas syringae pv. phaseolicola (strain 1448A / Race 6)).